Here is a 210-residue protein sequence, read N- to C-terminus: Stress-response A/B barrel domain-containing protein DABB1 (210 aa).

Stress-response A/B barrel domains lie at 5 to 100 and 116 to 204; these read VEHV…AVDW and IGKI…VVEF.

In terms of assembly, homodimer.

It is found in the cytoplasm. The protein localises to the cytosol. Its function is as follows. Involved in defense against fungal pathogens. Possesses antifungal activity against diverse pathogenic fungi. This is Stress-response A/B barrel domain-containing protein DABB1 from Arabidopsis thaliana (Mouse-ear cress).